Reading from the N-terminus, the 207-residue chain is Imidazole glycerol phosphate synthase subunit HisH (207 aa).

Positions 2–207 (RTVVIDYGMG…FKRKAEKLTT (206 aa)) constitute a Glutamine amidotransferase type-1 domain. Cys81 (nucleophile) is an active-site residue. Catalysis depends on residues His183 and Glu185.

Heterodimer of HisH and HisF.

The protein resides in the cytoplasm. It carries out the reaction 5-[(5-phospho-1-deoxy-D-ribulos-1-ylimino)methylamino]-1-(5-phospho-beta-D-ribosyl)imidazole-4-carboxamide + L-glutamine = D-erythro-1-(imidazol-4-yl)glycerol 3-phosphate + 5-amino-1-(5-phospho-beta-D-ribosyl)imidazole-4-carboxamide + L-glutamate + H(+). The catalysed reaction is L-glutamine + H2O = L-glutamate + NH4(+). It functions in the pathway amino-acid biosynthesis; L-histidine biosynthesis; L-histidine from 5-phospho-alpha-D-ribose 1-diphosphate: step 5/9. IGPS catalyzes the conversion of PRFAR and glutamine to IGP, AICAR and glutamate. The HisH subunit catalyzes the hydrolysis of glutamine to glutamate and ammonia as part of the synthesis of IGP and AICAR. The resulting ammonia molecule is channeled to the active site of HisF. The protein is Imidazole glycerol phosphate synthase subunit HisH (hisH) of Aquifex aeolicus (strain VF5).